Reading from the N-terminus, the 143-residue chain is Nucleoside diphosphate kinase (143 aa).

Residues lysine 11, phenylalanine 59, arginine 87, threonine 93, arginine 104, and asparagine 114 each contribute to the ATP site. Histidine 117 acts as the Pros-phosphohistidine intermediate in catalysis.

Belongs to the NDK family. As to quaternary structure, homotetramer. Mg(2+) serves as cofactor.

The protein localises to the cytoplasm. The catalysed reaction is a 2'-deoxyribonucleoside 5'-diphosphate + ATP = a 2'-deoxyribonucleoside 5'-triphosphate + ADP. It catalyses the reaction a ribonucleoside 5'-diphosphate + ATP = a ribonucleoside 5'-triphosphate + ADP. Major role in the synthesis of nucleoside triphosphates other than ATP. The ATP gamma phosphate is transferred to the NDP beta phosphate via a ping-pong mechanism, using a phosphorylated active-site intermediate. This Alteromonas mediterranea (strain DSM 17117 / CIP 110805 / LMG 28347 / Deep ecotype) protein is Nucleoside diphosphate kinase.